Consider the following 185-residue polypeptide: NOP protein chaperone 1 (185 aa).

Phosphoserine occurs at positions 34, 66, and 177. The disordered stretch occupies residues 121-185 (SRSDSKEEDS…DSPASKKKKQ (65 aa)).

In terms of assembly, interacts with NOP58, RUVBL1 and RUVBL2; the interactions are direct and NOPCHAP1 bridges the association of NOP58 with RUVBL1:RUVBL2 even in absence of snoRNAs. The interactions with RUVBL1 and RUVBL2 are disrupted upon ATP binding.

Its subcellular location is the nucleus. In terms of biological role, client-loading PAQosome/R2TP complex cofactor that selects NOP58 to promote box C/D small nucleolar ribonucleoprotein (snoRNP) assembly. Acts as a bridge between NOP58 and the R2TP complex via RUVBL1:RUVBL2. This is NOP protein chaperone 1 from Mus musculus (Mouse).